The following is a 184-amino-acid chain: ATP synthase subunit b, chloroplastic (184 aa).

Residues L27 to L49 form a helical membrane-spanning segment.

It belongs to the ATPase B chain family. As to quaternary structure, F-type ATPases have 2 components, F(1) - the catalytic core - and F(0) - the membrane proton channel. F(1) has five subunits: alpha(3), beta(3), gamma(1), delta(1), epsilon(1). F(0) has four main subunits: a(1), b(1), b'(1) and c(10-14). The alpha and beta chains form an alternating ring which encloses part of the gamma chain. F(1) is attached to F(0) by a central stalk formed by the gamma and epsilon chains, while a peripheral stalk is formed by the delta, b and b' chains.

The protein localises to the plastid. Its subcellular location is the chloroplast thylakoid membrane. Functionally, f(1)F(0) ATP synthase produces ATP from ADP in the presence of a proton or sodium gradient. F-type ATPases consist of two structural domains, F(1) containing the extramembraneous catalytic core and F(0) containing the membrane proton channel, linked together by a central stalk and a peripheral stalk. During catalysis, ATP synthesis in the catalytic domain of F(1) is coupled via a rotary mechanism of the central stalk subunits to proton translocation. Its function is as follows. Component of the F(0) channel, it forms part of the peripheral stalk, linking F(1) to F(0). The chain is ATP synthase subunit b, chloroplastic from Draba nemorosa (Woodland whitlowgrass).